The chain runs to 314 residues: Aspartate carbamoyltransferase catalytic subunit (314 aa).

Residues R53 and T54 each coordinate carbamoyl phosphate. K82 is an L-aspartate binding site. Carbamoyl phosphate-binding residues include R103, H131, and Q134. R164 and R230 together coordinate L-aspartate. Residues L267 and P268 each coordinate carbamoyl phosphate.

This sequence belongs to the aspartate/ornithine carbamoyltransferase superfamily. ATCase family. Heterooligomer of catalytic and regulatory chains.

The catalysed reaction is carbamoyl phosphate + L-aspartate = N-carbamoyl-L-aspartate + phosphate + H(+). It participates in pyrimidine metabolism; UMP biosynthesis via de novo pathway; (S)-dihydroorotate from bicarbonate: step 2/3. Catalyzes the condensation of carbamoyl phosphate and aspartate to form carbamoyl aspartate and inorganic phosphate, the committed step in the de novo pyrimidine nucleotide biosynthesis pathway. This chain is Aspartate carbamoyltransferase catalytic subunit, found in Methanococcus aeolicus (strain ATCC BAA-1280 / DSM 17508 / OCM 812 / Nankai-3).